Here is a 116-residue protein sequence, read N- to C-terminus: Cocaine- and amphetamine-regulated transcript protein (116 aa).

The first 27 residues, 1–27 (MESPRLRLLPLLGAALLLLLPLLGALA), serve as a signal peptide directing secretion. Tyr41 is modified (phosphotyrosine). Position 48 is a phosphoserine (Ser48). 3 disulfides stabilise this stretch: Cys82-Cys100, Cys88-Cys108, and Cys102-Cys115.

The protein belongs to the CART family.

It is found in the secreted. Functionally, satiety factor closely associated with the actions of leptin and neuropeptide y; this anorectic peptide inhibits both normal and starvation-induced feeding and completely blocks the feeding response induced by neuropeptide Y and regulated by leptin in the hypothalamus. The chain is Cocaine- and amphetamine-regulated transcript protein (CARTPT) from Bos taurus (Bovine).